A 308-amino-acid chain; its full sequence is Ribonuclease Z (308 aa).

Residues His62, His64, Asp66, His67, His140, Asp211, and His269 each contribute to the Zn(2+) site. Asp66 acts as the Proton acceptor in catalysis.

Belongs to the RNase Z family. As to quaternary structure, homodimer. Zn(2+) serves as cofactor.

It carries out the reaction Endonucleolytic cleavage of RNA, removing extra 3' nucleotides from tRNA precursor, generating 3' termini of tRNAs. A 3'-hydroxy group is left at the tRNA terminus and a 5'-phosphoryl group is left at the trailer molecule.. In terms of biological role, zinc phosphodiesterase, which displays some tRNA 3'-processing endonuclease activity. Probably involved in tRNA maturation, by removing a 3'-trailer from precursor tRNA. The chain is Ribonuclease Z from Treponema denticola (strain ATCC 35405 / DSM 14222 / CIP 103919 / JCM 8153 / KCTC 15104).